The sequence spans 31 residues: Photosystem II reaction center protein T (31 aa).

The chain crosses the membrane as a helical span at residues 3 to 23 (ALVYTFLLVGTLGIIFFSIFF).

It belongs to the PsbT family. PSII is composed of 1 copy each of membrane proteins PsbA, PsbB, PsbC, PsbD, PsbE, PsbF, PsbH, PsbI, PsbJ, PsbK, PsbL, PsbM, PsbT, PsbY, PsbZ, Psb30/Ycf12, at least 3 peripheral proteins of the oxygen-evolving complex and a large number of cofactors. It forms dimeric complexes.

It localises to the plastid. It is found in the chloroplast thylakoid membrane. In terms of biological role, found at the monomer-monomer interface of the photosystem II (PS II) dimer, plays a role in assembly and dimerization of PSII. PSII is a light-driven water plastoquinone oxidoreductase, using light energy to abstract electrons from H(2)O, generating a proton gradient subsequently used for ATP formation. The sequence is that of Photosystem II reaction center protein T from Chlamydomonas reinhardtii (Chlamydomonas smithii).